Here is a 2544-residue protein sequence, read N- to C-terminus: DNA polymerase theta (2544 aa).

The segment covering 1-13 has biased composition (basic residues); sequence MSLPRRSRKRRRS. Residues 1-57 form a disordered region; that stretch reads MSLPRRSRKRRRSSSGSDTFSGDGDSFVSPQLRCGPVLSPPPGLGRGRRLTGTGTNK. Low complexity predominate over residues 14–29; it reads SSGSDTFSGDGDSFVS. ATP is bound by residues glutamine 95 and 114–121; that span reads APTSAGKT. Residues 101 to 285 enclose the Helicase ATP-binding domain; it reads LGHVLEGKNL…WLNAELYHTD (185 aa). Residues 101–551 are helicase activity; that stretch reads LGHVLEGKNL…STSQDMQTYA (451 aa). A DEAH box motif is present at residues 215–218; that stretch reads DELH. Positions 320–551 constitute a Helicase C-terminal domain; sequence GDEDHIVSLC…STSQDMQTYA (232 aa). Positions 844 to 890 are interaction with RAD51; the sequence is DEEEEAAEERRSMRTIWVTGKGLSAREAAALIVEEAKMILQQDLIEM. Residues 896 to 955 are disordered; it reads PKSPLSSSTHSRTSTSEVKEHTFKSQTKSSHKRLASMGRNSIRASGSNDKPSPDAERGID. A compositionally biased stretch (low complexity) spans 898–911; that stretch reads SPLSSSTHSRTSTS. A compositionally biased stretch (polar residues) spans 933–945; that stretch reads GRNSIRASGSNDK. The span at 946 to 955 shows a compositional bias: basic and acidic residues; it reads PSPDAERGID. An N6-acetyllysine modification is found at lysine 983. The segment covering 1022 to 1034 has biased composition (polar residues); it reads LSFSSEQVNNTLP. 2 disordered regions span residues 1022 to 1058 and 1128 to 1167; these read LSFSSEQVNNTLPSGRDRKYQKKSWGSSPVRDSGMHR and VGHPAAGSSPAAARDRRGLAARETEKGNEALTENGGESQL. Over residues 1128 to 1139 the composition is skewed to low complexity; it reads VGHPAAGSSPAA. Over residues 1140 to 1155 the composition is skewed to basic and acidic residues; sequence ARDRRGLAARETEKGN. Serine 1265 bears the Phosphoserine mark. 2 disordered regions span residues 1266 to 1288 and 1331 to 1353; these read GVQGKTGAHATNRTEHSHASNPA and QNKCHSTPGDQHVPGAANTDHVD. A phosphoserine mark is found at serine 1438, serine 1442, serine 1444, and serine 1449. Residues 1478 to 1501 are disordered; it reads FSNPPHPQEDPVMTPTVSEPQGTQ. The segment covering 1492–1501 has biased composition (polar residues); it reads PTVSEPQGTQ. 4 positions are modified to phosphoserine: serine 1511, serine 1519, serine 1585, and serine 1592. A disordered region spans residues 1557–1591; it reads ECPQGKLVRGDQNEGSPKPKLTETNQDNSFTWSGA. Positions 1578–1591 are enriched in polar residues; that stretch reads TETNQDNSFTWSGA. Basic and acidic residues-rich tracts occupy residues 1606–1616 and 1628–1638; these read VSSPRENEKPK and NSKESHEREEI. The disordered stretch occupies residues 1606 to 1697; the sequence is VSSPRENEKP…GLIPPTPVPA (92 aa). Positions 1641–1652 are enriched in polar residues; it reads DLGTVQRTSVFP. Over residues 1656–1667 the composition is skewed to basic and acidic residues; the sequence is VKNRTEGLESKA. A Phosphothreonine modification is found at threonine 1710. The interval 2052 to 2538 is DNA polymerase activity; the sequence is AECESQKHVM…KVKIGASWGE (487 aa). 2 loop regions span residues 2097 to 2132 and 2212 to 2276; these read KLPPNGEMKTQGSKKTLGSTRRGNESGRRMRLGRQF and EIKM…VPFP. Residues 2104 to 2117 show a composition bias toward polar residues; it reads MKTQGSKKTLGSTR. The interval 2104–2124 is disordered; sequence MKTQGSKKTLGSTRRGNESGR. The active-site For DNA polymerase activity is the aspartate 2284. Residues aspartate 2284 and tyrosine 2285 each coordinate Mg(2+). The tract at residues 2445 to 2489 is loop 3; it reads QLETFRSTFKSHGHRESMLQNDRTGLLPKRKLKGMFCPMRGGFFI. Residue aspartate 2494 participates in Mg(2+) binding.

Belongs to the DNA polymerase type-A family. In terms of assembly, homomultimer; forms homodimers and homotetramers. Interacts with RAD51. Interacts with ORC2 and ORC4. Interacts with RHNO1; interaction takes place during mitosis and promotes POLQ recruitment to DNA damage sites. Interacts (when phosphorylated) with TOPBP1 (via BRCT domains 7 and 8); promoting POLQ recruitment to DNA damage sites. It depends on Mg(2+) as a cofactor. In terms of processing, phosphorylated by PLK1; promoting interaction with TOPBP1 and recruitment to DNA damage sites.

It localises to the nucleus. The protein localises to the chromosome. The catalysed reaction is DNA(n) + a 2'-deoxyribonucleoside 5'-triphosphate = DNA(n+1) + diphosphate. It carries out the reaction ATP + H2O = ADP + phosphate + H(+). Functionally, low-fidelity DNA polymerase with a helicase activity that promotes microhomology-mediated end-joining (MMEJ), an alternative non-homologous end-joining (NHEJ) machinery required to repair double-strand breaks in DNA during mitosis. MMEJ is an error-prone repair pathway that produces deletions of sequences from the strand being repaired and promotes genomic rearrangements, such as telomere fusions, some of them leading to cellular transformation. MMEJ is required during mitosis to repair persistent double-strand breaks that originate in S-phase. Although error-prone, MMEJ protects against chromosomal instability and tumorigenesis. The polymerase acts by binding directly the 2 ends of resected double-strand breaks, allowing microhomologous sequences in the overhangs to form base pairs. It then extends each strand from the base-paired region using the opposing overhang as a template. Requires partially resected DNA containing 2 to 6 base pairs of microhomology to perform MMEJ. The polymerase lacks proofreading activity and is highly promiscuous: unlike most polymerases, promotes extension of ssDNA and partial ssDNA (pssDNA) substrates. When the ends of a break do not contain terminal microhomology must identify embedded complementary sequences through a scanning step. Also acts as a DNA helicase, promoting dissociation of the replication protein A complex (RPA/RP-A), composed of RPA1, RPA2 and RPA3, from resected double-strand breaks to allow their annealing and subsequent joining by MMEJ. Removal of RPA/RP-A complex proteins prevents RAD51 accumulation at resected ends, thereby inhibiting homology-recombination repair (HR) pathway. Also shows RNA-directed DNA polymerase activity to mediate DNA repair in vitro; however this activity needs additional evidence in vivo. May also have lyase activity. Involved in somatic hypermutation of immunoglobulin genes, a process that requires the activity of DNA polymerases to ultimately introduce mutations at both A/T and C/G base pairs. However, POLQ does not play a major role in somatic hypermutation. POLQ-mediated end joining activity is involved in random integration of exogenous DNA hampers. This Mus musculus (Mouse) protein is DNA polymerase theta.